We begin with the raw amino-acid sequence, 1026 residues long: Lon protease homolog, mitochondrial (1026 aa).

Residues 1-29 constitute a mitochondrion transit peptide; sequence MLGTRVTRAVYTRAPLKLQLRALGLHRRY. Disordered regions lie at residues 29 to 55 and 185 to 206; these read YVHN…DKKL and ASEE…DKVS. A Lon N-terminal domain is found at 62–345; that stretch reads MLALPISRRP…KSLLVLKKEL (284 aa). Residues 185–194 are compositionally biased toward acidic residues; the sequence is ASEETKDEET. A compositionally biased stretch (basic and acidic residues) spans 195–206; that stretch reads VDKTESATDKVS. Position 497–504 (497–504) interacts with ATP; the sequence is GPPGVGKT. The disordered stretch occupies residues 711–785; sequence TEPLVSTSEE…EEEEDTSMIV (75 aa). Polar residues predominate over residues 714–737; sequence LVSTSEEPQLSQTNQNISSSSAED. In terms of domain architecture, Lon proteolytic spans 815–1001; that stretch reads TTPPGVIMGL…DDIYKRLFSG (187 aa). Active-site residues include S907 and K950.

It belongs to the peptidase S16 family. Homohexamer or homoheptamer. Organized in a ring with a central cavity.

Its subcellular location is the mitochondrion matrix. It catalyses the reaction Hydrolysis of proteins in presence of ATP.. Its function is as follows. ATP-dependent serine protease that mediates the selective degradation of misfolded, unassembled or oxidatively damaged polypeptides as well as certain short-lived regulatory proteins in the mitochondrial matrix. May also have a chaperone function in the assembly of inner membrane protein complexes. Participates in the regulation of mitochondrial gene expression and in the maintenance of the integrity of the mitochondrial genome. Binds to mitochondrial DNA in a site-specific manner. The sequence is that of Lon protease homolog, mitochondrial from Candida glabrata (strain ATCC 2001 / BCRC 20586 / JCM 3761 / NBRC 0622 / NRRL Y-65 / CBS 138) (Yeast).